The following is a 202-amino-acid chain: Large ribosomal subunit protein eL13 (202 aa).

The interval 183–202 is disordered; the sequence is GIREKRAKEKAEAEAEKAKK.

The protein belongs to the eukaryotic ribosomal protein eL13 family. In terms of assembly, component of the large ribosomal subunit. Mature ribosomes consist of a small (40S) and a large (60S) subunit. The 40S subunit contains about 32 different proteins and 1 molecule of RNA (18S). The 60S subunit contains 45 different proteins and 3 molecules of RNA (25S, 5.8S and 5S).

Its subcellular location is the cytoplasm. In terms of biological role, component of the ribosome, a large ribonucleoprotein complex responsible for the synthesis of proteins in the cell. The small ribosomal subunit (SSU) binds messenger RNAs (mRNAs) and translates the encoded message by selecting cognate aminoacyl-transfer RNA (tRNA) molecules. The large subunit (LSU) contains the ribosomal catalytic site termed the peptidyl transferase center (PTC), which catalyzes the formation of peptide bonds, thereby polymerizing the amino acids delivered by tRNAs into a polypeptide chain. The nascent polypeptides leave the ribosome through a tunnel in the LSU and interact with protein factors that function in enzymatic processing, targeting, and the membrane insertion of nascent chains at the exit of the ribosomal tunnel. In Candida albicans (strain SC5314 / ATCC MYA-2876) (Yeast), this protein is Large ribosomal subunit protein eL13.